Consider the following 503-residue polypeptide: UPF0522 protein C (503 aa).

The signal sequence occupies residues 1 to 18 (MKLFILIILSICLALVNS). Asn-330, Asn-337, and Asn-370 each carry an N-linked (GlcNAc...) asparagine glycan.

The protein belongs to the UPF0522 family.

The protein resides in the secreted. The sequence is that of UPF0522 protein C from Dictyostelium discoideum (Social amoeba).